The primary structure comprises 225 residues: MEPIKNIPRLCRTLGYDFSELALLDHALTHRSAASKHNERLEFLGDSILSIIISDALYHQFPKATEGDLSRMRATLVCGKMLAEIGFEFKLGDYLKLGPGELKSGGFRRESIIADAVEAIIGAVYLDSDLEVTRSLVLGWYKTRLETIQPINQKDPKTLLQELLQGYKKPLPVYKVTDIRGEAHAQTFTIECYVEELRKPVVGVASSRRKAEQLAAAQALELIKR.

The RNase III domain maps to isoleucine 7–aspartate 129. Glutamate 42 provides a ligand contact to Mg(2+). Aspartate 46 is an active-site residue. Positions 115 and 118 each coordinate Mg(2+). Residue glutamate 118 is part of the active site. The DRBM domain occupies aspartate 155 to arginine 225.

The protein belongs to the ribonuclease III family. As to quaternary structure, homodimer. Mg(2+) serves as cofactor.

The protein localises to the cytoplasm. It carries out the reaction Endonucleolytic cleavage to 5'-phosphomonoester.. Its function is as follows. Digests double-stranded RNA. Involved in the processing of primary rRNA transcript to yield the immediate precursors to the large and small rRNAs (23S and 16S). Processes some mRNAs, and tRNAs when they are encoded in the rRNA operon. Processes pre-crRNA and tracrRNA of type II CRISPR loci if present in the organism. This Shewanella woodyi (strain ATCC 51908 / MS32) protein is Ribonuclease 3.